The following is a 793-amino-acid chain: Short transient receptor potential channel 1 (793 aa).

The tract at residues 1–30 (MMAALYPSTDLSGASSSSLPSSPSSSSPNE) is disordered. Topologically, residues 1 to 345 (MMAALYPSTD…FGQMSGYRRK (345 aa)) are cytoplasmic. A compositionally biased stretch (low complexity) spans 15–28 (SSSSLPSSPSSSSP). 4 ANK repeats span residues 46–75 (LNEKLFLLACDKGDYYMVKKILEENSSGDL), 83–109 (LGRNAVTITIENENLDILQLLLDYGCQ), 111–156 (ADAL…EYST), and 158–180 (MDVAPVILAAHRNNYEILTMLLK). Zn(2+) is bound by residues His-189, Cys-193, Cys-195, and Cys-198. Residues 346–379 (PTCKKIMTVLTVGIFWPVLSLCYLIAPKSQFGRI) constitute an intramembrane region (discontinuously helical). The Cytoplasmic portion of the chain corresponds to 380–386 (IHTPFMK). The chain crosses the membrane as a helical span at residues 387–404 (FIIHGASYFTFLLLLNLY). At 405-422 (SLVYNEDKKNTMGPALER) the chain is on the extracellular side. The helical transmembrane segment at 423–439 (IDYLLILWIIGMIWSDI) threads the bilayer. The Cytoplasmic portion of the chain corresponds to 440-455 (KRLWYEGLEDFLEESR). The helical transmembrane segment at 456–475 (NQLSFVMNSLYLATFALKVV) threads the bilayer. Over 476-496 (AHNKFHDFADRKDWDAFHPTL) the chain is Extracellular. A helical transmembrane segment spans residues 497–517 (VAEGLFAFANVLSYLRLFFMY). Residues 518–536 (TTSSILGPLQISMGQMLQD) lie on the Cytoplasmic side of the membrane. Residues 537–558 (FGKFLGMFLLVLFSFTIGLTQL) form a helical membrane-spanning segment. Residues 559-623 (YDKGYTSKEQ…GEELQSFVGA (65 aa)) are Extracellular-facing. The cysteines at positions 571 and 576 are disulfide-linked. The helical transmembrane segment at 624–644 (VIVGTYNVVVVIVLTKLLVAM) threads the bilayer. The Cytoplasmic portion of the chain corresponds to 645-793 (LHKSFQLIAN…SKYAMFYPRN (149 aa)).

This sequence belongs to the transient receptor (TC 1.A.4) family. STrpC subfamily. TRPC1 sub-subfamily. In terms of assembly, heterotetramer with TRPC4 and/or TRPC5. Forms a heteromeric ion channel with TRPC4, with a 1:3 TRPC1:TRPC4 stoichiometry. Unlike other TRP channel proteins, does not form a homomeric channel. Interacts with TRPC4AP. Interacts with ITPR3. Interacts with MX1 and RNF24. Interacts with FKBP4. Interacts with PLSCR1. Interacts with PKD2L2. Forms a heterotetramer with PKD2 with a 2:2 stoichiometry; has distinct channel properties separate from PKD2 or TRPC1 homomers alone. As to quaternary structure, interacts with isoform 2 of TRPC3. In terms of processing, activation of PRKCA induces phosphorylation of TRPC1 and subsequent Ca2+ entry into cells. In terms of tissue distribution, seems to be ubiquitous.

The protein resides in the cell membrane. It carries out the reaction Ca(2+)(in) = Ca(2+)(out). The catalysed reaction is Na(+)(in) = Na(+)(out). It catalyses the reaction Li(+)(in) = Li(+)(out). The enzyme catalyses Cs(+)(in) = Cs(+)(out). Its activity is regulated as follows. May be operated by a phosphatidylinositol second messenger system activated by receptor tyrosine kinases or G-protein coupled receptors. Also activated by intracellular calcium store depletion. Inhibited by xanthine-based inhibitor Pico145. Forms a receptor-activated non-selective calcium permeant cation channel. Forms a heteromeric ion channel with TRPC4 or TRPC5 that has reduced calcium permeability compared to the homomeric TRPC4 or TRPC5 channel. Also permeable to monovalent ions including sodium, lithium and cesium ions. Its function is as follows. Forms a receptor-activated non-selective calcium permeant cation channel. Also activated by intracellular calcium store depletion. The polypeptide is Short transient receptor potential channel 1 (TRPC1) (Homo sapiens (Human)).